Here is a 162-residue protein sequence, read N- to C-terminus: Crossover junction endodeoxyribonuclease RuvC (162 aa).

Catalysis depends on residues Asp8, Glu69, and His141. Mg(2+) contacts are provided by Asp8, Glu69, and His141.

The protein belongs to the RuvC family. In terms of assembly, homodimer which binds Holliday junction (HJ) DNA. The HJ becomes 2-fold symmetrical on binding to RuvC with unstacked arms; it has a different conformation from HJ DNA in complex with RuvA. In the full resolvosome a probable DNA-RuvA(4)-RuvB(12)-RuvC(2) complex forms which resolves the HJ. It depends on Mg(2+) as a cofactor.

The protein resides in the cytoplasm. It carries out the reaction Endonucleolytic cleavage at a junction such as a reciprocal single-stranded crossover between two homologous DNA duplexes (Holliday junction).. Its function is as follows. The RuvA-RuvB-RuvC complex processes Holliday junction (HJ) DNA during genetic recombination and DNA repair. Endonuclease that resolves HJ intermediates. Cleaves cruciform DNA by making single-stranded nicks across the HJ at symmetrical positions within the homologous arms, yielding a 5'-phosphate and a 3'-hydroxyl group; requires a central core of homology in the junction. The consensus cleavage sequence is 5'-(A/T)TT(C/G)-3'. Cleavage occurs on the 3'-side of the TT dinucleotide at the point of strand exchange. HJ branch migration catalyzed by RuvA-RuvB allows RuvC to scan DNA until it finds its consensus sequence, where it cleaves and resolves the cruciform DNA. The polypeptide is Crossover junction endodeoxyribonuclease RuvC (Wolbachia sp. subsp. Drosophila simulans (strain wRi)).